The following is a 351-amino-acid chain: D-alanine--D-alanine ligase (351 aa).

The ATP-grasp domain occupies Lys141–Glu349. An ATP-binding site is contributed by Glu176–Glu231. Mg(2+) is bound by residues Asp302, Glu316, and Asn318.

Belongs to the D-alanine--D-alanine ligase family. Mg(2+) serves as cofactor. The cofactor is Mn(2+).

The protein resides in the cytoplasm. It catalyses the reaction 2 D-alanine + ATP = D-alanyl-D-alanine + ADP + phosphate + H(+). The protein operates within cell wall biogenesis; peptidoglycan biosynthesis. In terms of biological role, cell wall formation. The sequence is that of D-alanine--D-alanine ligase from Prochlorococcus marinus (strain SARG / CCMP1375 / SS120).